Reading from the N-terminus, the 875-residue chain is Alanine--tRNA ligase (875 aa).

Zn(2+)-binding residues include H565, H569, C666, and H670.

It belongs to the class-II aminoacyl-tRNA synthetase family. It depends on Zn(2+) as a cofactor.

It localises to the cytoplasm. It carries out the reaction tRNA(Ala) + L-alanine + ATP = L-alanyl-tRNA(Ala) + AMP + diphosphate. Its function is as follows. Catalyzes the attachment of alanine to tRNA(Ala) in a two-step reaction: alanine is first activated by ATP to form Ala-AMP and then transferred to the acceptor end of tRNA(Ala). Also edits incorrectly charged Ser-tRNA(Ala) and Gly-tRNA(Ala) via its editing domain. This chain is Alanine--tRNA ligase, found in Methylibium petroleiphilum (strain ATCC BAA-1232 / LMG 22953 / PM1).